The following is a 104-amino-acid chain: MALKLRRNDEIIILTGKDKGKKGIIKNILSSNKAIVNGLNLVKKHQKPLPSQNKNGGILEKEAPIQISNIAIFNPELKKADRIGFRFEEGKKVRFFKSNKKTIK.

The protein belongs to the universal ribosomal protein uL24 family. As to quaternary structure, part of the 50S ribosomal subunit.

In terms of biological role, one of two assembly initiator proteins, it binds directly to the 5'-end of the 23S rRNA, where it nucleates assembly of the 50S subunit. Its function is as follows. One of the proteins that surrounds the polypeptide exit tunnel on the outside of the subunit. This Buchnera aphidicola subsp. Schizaphis graminum (strain Sg) protein is Large ribosomal subunit protein uL24.